The following is a 150-amino-acid chain: Large ribosomal subunit protein bL9 (150 aa).

Belongs to the bacterial ribosomal protein bL9 family.

Binds to the 23S rRNA. The chain is Large ribosomal subunit protein bL9 from Corynebacterium aurimucosum (strain ATCC 700975 / DSM 44827 / CIP 107346 / CN-1) (Corynebacterium nigricans).